The chain runs to 54 residues: Ribulose bisphosphate carboxylase large chain (54 aa).

Positions 1-2 (MS) are excised as a propeptide. Pro-3 carries the post-translational modification N-acetylproline. Lys-14 carries the post-translational modification N6,N6,N6-trimethyllysine.

The protein belongs to the RuBisCO large chain family. Type I subfamily. Heterohexadecamer of 8 large chains and 8 small chains.

Its subcellular location is the plastid. It is found in the chloroplast. The enzyme catalyses 2 (2R)-3-phosphoglycerate + 2 H(+) = D-ribulose 1,5-bisphosphate + CO2 + H2O. It carries out the reaction D-ribulose 1,5-bisphosphate + O2 = 2-phosphoglycolate + (2R)-3-phosphoglycerate + 2 H(+). Functionally, ruBisCO catalyzes two reactions: the carboxylation of D-ribulose 1,5-bisphosphate, the primary event in carbon dioxide fixation, as well as the oxidative fragmentation of the pentose substrate in the photorespiration process. Both reactions occur simultaneously and in competition at the same active site. In Colletia hystrix (Crucifixion thorn), this protein is Ribulose bisphosphate carboxylase large chain (rbcL).